Consider the following 626-residue polypeptide: Ankyrin repeat domain-containing protein 13B (626 aa).

M1 bears the N-acetylmethionine mark. ANK repeat units follow at residues 47–76 and 80–109; these read RGRT…DVGR and SGWT…YQRV. The disordered stretch occupies residues 442-470; that stretch reads PVPSVRGSPGSETPSPGSDSSSVSSSSST. Residues 448–470 show a composition bias toward low complexity; that stretch reads GSPGSETPSPGSDSSSVSSSSST. The region spanning 503–522 is the UIM 1 domain; that stretch reads EDDDLLRFAIQQSLLEAGSE. A disordered region spans residues 534 to 614; sequence NSKPGTHPMS…RRRVRQEEEE (81 aa). Pro residues predominate over residues 554–575; it reads PPTPQRQPMPPAPVPSPRPSPG. UIM domains follow at residues 585-604 and 610-626; these read SYDE…QEER and QEEE…LTEQ.

Interacts with EGFR (ubiquitinated); the interaction is direct and may regulate EGFR internalization.

It localises to the cell membrane. The protein resides in the late endosome. Its subcellular location is the early endosome. Functionally, ubiquitin-binding protein that specifically recognizes and binds 'Lys-63'-linked ubiquitin. Does not bind 'Lys-48'-linked ubiquitin. Positively regulates the internalization of ligand-activated EGFR by binding to the Ub moiety of ubiquitinated EGFR at the cell membrane. The polypeptide is Ankyrin repeat domain-containing protein 13B (Ankrd13b) (Mus musculus (Mouse)).